A 263-amino-acid polypeptide reads, in one-letter code: Proteasome subunit alpha type-1 (263 aa).

M1 is modified (N-acetylmethionine). S110 carries the phosphoserine; alternate modification. The O-linked (GlcNAc) serine; alternate glycan is linked to S110. Residue K115 forms a Glycyl lysine isopeptide (Lys-Gly) (interchain with G-Cter in ubiquitin) linkage. S177 carries the post-translational modification Phosphoserine. K208 is covalently cross-linked (Glycyl lysine isopeptide (Lys-Gly) (interchain with G-Cter in ubiquitin)). The interval 232–263 (FLDGLEERPQRKAQPSQAADEPAEKADEPMEH) is disordered. The span at 253-263 (PAEKADEPMEH) shows a compositional bias: basic and acidic residues.

It belongs to the peptidase T1A family. In terms of assembly, the 26S proteasome consists of a 20S proteasome core and two 19S regulatory subunits. The 20S proteasome core is a barrel-shaped complex made of 28 subunits that are arranged in four stacked rings. The two outer rings are each formed by seven alpha subunits, and the two inner rings are formed by seven beta subunits. The proteolytic activity is exerted by three beta-subunits PSMB5, PSMB6 and PSMB7. Interacts with NOTCH3. Interacts with ZFAND1. Proteolytically cleaved from a C-terminal extension in the course of the conversion of the proteasome from its latent form into its active form. In terms of tissue distribution, ubiquitous.

Its subcellular location is the cytoplasm. The protein localises to the nucleus. Component of the 20S core proteasome complex involved in the proteolytic degradation of most intracellular proteins. This complex plays numerous essential roles within the cell by associating with different regulatory particles. Associated with two 19S regulatory particles, forms the 26S proteasome and thus participates in the ATP-dependent degradation of ubiquitinated proteins. The 26S proteasome plays a key role in the maintenance of protein homeostasis by removing misfolded or damaged proteins that could impair cellular functions, and by removing proteins whose functions are no longer required. Associated with the PA200 or PA28, the 20S proteasome mediates ubiquitin-independent protein degradation. This type of proteolysis is required in several pathways including spermatogenesis (20S-PA200 complex) or generation of a subset of MHC class I-presented antigenic peptides (20S-PA28 complex). The chain is Proteasome subunit alpha type-1 (Psma1) from Rattus norvegicus (Rat).